A 446-amino-acid chain; its full sequence is Argininosuccinate lyase (446 aa).

The protein belongs to the lyase 1 family. Argininosuccinate lyase subfamily.

It localises to the cytoplasm. It catalyses the reaction 2-(N(omega)-L-arginino)succinate = fumarate + L-arginine. It participates in amino-acid biosynthesis; L-arginine biosynthesis; L-arginine from L-ornithine and carbamoyl phosphate: step 3/3. In Bacteroides thetaiotaomicron (strain ATCC 29148 / DSM 2079 / JCM 5827 / CCUG 10774 / NCTC 10582 / VPI-5482 / E50), this protein is Argininosuccinate lyase.